Consider the following 173-residue polypeptide: MQIVSELVIMGRIVAPYGVYGWVKVQPATEYVDSLFDYGRWMLGRGDPKQPEQWQSCEVEKAKVHNDLLLVKLQGIDDRDQAFSCKGMYVAVYRDELPEPEEGEYYWSDLIGLQVRNQQEVDFGQVVDVFATGANDVLVVKGDRERLVPFIGQVVLEVDTDGKTMLVDWDPEF.

A PRC barrel domain is found at 102–173 (EGEYYWSDLI…TMLVDWDPEF (72 aa)).

The protein belongs to the RimM family. In terms of assembly, binds ribosomal protein uS19.

The protein localises to the cytoplasm. An accessory protein needed during the final step in the assembly of 30S ribosomal subunit, possibly for assembly of the head region. Essential for efficient processing of 16S rRNA. May be needed both before and after RbfA during the maturation of 16S rRNA. It has affinity for free ribosomal 30S subunits but not for 70S ribosomes. This Methylobacillus flagellatus (strain ATCC 51484 / DSM 6875 / VKM B-1610 / KT) protein is Ribosome maturation factor RimM.